We begin with the raw amino-acid sequence, 567 residues long: UPF0313 protein Tpet_0582 (567 aa).

The region spanning Lys288–Lys560 is the Radical SAM core domain. Residues Cys303, Cys307, and Cys310 each contribute to the [4Fe-4S] cluster site.

This sequence belongs to the UPF0313 family. Requires [4Fe-4S] cluster as cofactor.

This chain is UPF0313 protein Tpet_0582, found in Thermotoga petrophila (strain ATCC BAA-488 / DSM 13995 / JCM 10881 / RKU-1).